Reading from the N-terminus, the 114-residue chain is MSQRVCFMEIEMIKGGNVYTFIRLKEEPMTEFEKLVSEQMKTMDKLLDLQSELDRCKQIEAELRHLERDARLRGIQAEIAVKRKHLADIQDMFQKQTEQVIRSYRSSEKPSSFV.

Residues 31 to 72 adopt a coiled-coil conformation; that stretch reads EFEKLVSEQMKTMDKLLDLQSELDRCKQIEAELRHLERDARL.

This is an uncharacterized protein from Bacillus subtilis (strain 168).